Reading from the N-terminus, the 352-residue chain is Ion-translocating oxidoreductase complex subunit D (352 aa).

A run of 4 helical transmembrane segments spans residues 20–40 (IMLLVLIAALPGIAAQTWFFG), 42–62 (GTLFQIVLAAITALVAEAIVL), 69–91 (VASHLQDYSALLTGLLLAVSIPP), and 123–143 (PAMIGYVVLLISFPVQMTSWL). Threonine 187 carries the post-translational modification FMN phosphoryl threonine. A run of 5 helical transmembrane segments spans residues 215 to 235 (LAGVGWQWVNLAWLVGGVFLL), 242 to 262 (WHIPVSFLLTLALCAALGWLF), 267 to 287 (LASPQLHLLSGATMLGAFFIL), 301 to 321 (LIFGALAGVLVWLIRSFGGYP), and 322 to 342 (DGVAFAVLLANITVPLIDYYT).

Belongs to the NqrB/RnfD family. As to quaternary structure, the complex is composed of six subunits: RsxA, RsxB, RsxC, RsxD, RsxE and RsxG. FMN serves as cofactor.

It is found in the cell inner membrane. In terms of biological role, part of a membrane-bound complex that couples electron transfer with translocation of ions across the membrane. Required to maintain the reduced state of SoxR. The protein is Ion-translocating oxidoreductase complex subunit D of Salmonella typhi.